The following is a 97-amino-acid chain: Serine protease inhibitor Kazal-type 13 (97 aa).

The first 26 residues, 1 to 26, serve as a signal peptide directing secretion; that stretch reads MKRSGCWHQRMLLSLVLLTWTHVTFS. The N-linked (GlcNAc...) asparagine glycan is linked to asparagine 33. Positions 36 to 97 constitute a Kazal-like domain; the sequence is RWPKPPCKMY…IQFVKYGKCE (62 aa). Intrachain disulfides connect cysteine 42-cysteine 78, cysteine 56-cysteine 75, and cysteine 64-cysteine 96.

It localises to the secreted. Functionally, may be a serine protease inhibitor. Essential for sperm maturation and fertility. Inhibits sperm acrosome reaction, protecting sperm from premature reaction. This is Serine protease inhibitor Kazal-type 13 (Spink13) from Mus musculus (Mouse).